The sequence spans 400 residues: NADH-quinone oxidoreductase subunit D (400 aa).

This sequence belongs to the complex I 49 kDa subunit family. As to quaternary structure, NDH-1 is composed of 14 different subunits. Subunits NuoB, C, D, E, F, and G constitute the peripheral sector of the complex.

The protein resides in the cell inner membrane. It catalyses the reaction a quinone + NADH + 5 H(+)(in) = a quinol + NAD(+) + 4 H(+)(out). In terms of biological role, NDH-1 shuttles electrons from NADH, via FMN and iron-sulfur (Fe-S) centers, to quinones in the respiratory chain. The immediate electron acceptor for the enzyme in this species is believed to be menaquinone. Couples the redox reaction to proton translocation (for every two electrons transferred, four hydrogen ions are translocated across the cytoplasmic membrane), and thus conserves the redox energy in a proton gradient. In Prosthecochloris aestuarii (strain DSM 271 / SK 413), this protein is NADH-quinone oxidoreductase subunit D.